Consider the following 211-residue polypeptide: MSGILGKKIGMTQIFEDGKFVPVTVVEAGPNFVLQKKTEEKDGYVALQLGFDEKKEKNTTKPLMGIFNKAGVKPQRFVKELEVESVDGYELGQEIKVDVLTEVGYVDITGTSKGKGTSGVMKKHGFSGNRASHGVSRNHRLGGSIGMSSWPGKVLKGKKMAGQHGNATVTVQNLKVVKVDAEHNLLLIKGAVPGAKNSYLVIKPAVKKVIG.

The tract at residues 116–142 (GTSGVMKKHGFSGNRASHGVSRNHRLG) is disordered.

It belongs to the universal ribosomal protein uL3 family. In terms of assembly, part of the 50S ribosomal subunit. Forms a cluster with proteins L14 and L19.

In terms of biological role, one of the primary rRNA binding proteins, it binds directly near the 3'-end of the 23S rRNA, where it nucleates assembly of the 50S subunit. This is Large ribosomal subunit protein uL3 from Fusobacterium nucleatum subsp. nucleatum (strain ATCC 25586 / DSM 15643 / BCRC 10681 / CIP 101130 / JCM 8532 / KCTC 2640 / LMG 13131 / VPI 4355).